A 434-amino-acid chain; its full sequence is Trigger factor (434 aa).

Positions 160–245 constitute a PPIase FKBP-type domain; sequence GDKVKMNFVG…LTEVQAAQLP (86 aa).

The protein belongs to the FKBP-type PPIase family. Tig subfamily.

It localises to the cytoplasm. The enzyme catalyses [protein]-peptidylproline (omega=180) = [protein]-peptidylproline (omega=0). Involved in protein export. Acts as a chaperone by maintaining the newly synthesized protein in an open conformation. Functions as a peptidyl-prolyl cis-trans isomerase. The chain is Trigger factor from Shewanella denitrificans (strain OS217 / ATCC BAA-1090 / DSM 15013).